The following is a 151-amino-acid chain: MNRSFHFLIKYIYIHVLLVFYFHIKQQAIMPFFIFFFSSFDGLSFDLRVVAFLAKHVFVGVCSPFFVVGFFGSSRVVVTEWLSKLVLPPPPVSITQVFSLSRKRGEFSSGYILIINPYKSFLRSLLDFSIFNNTAKNKSSTFTLNLEDVSK.

A glycan (N-linked (GlcNAc...) asparagine) is linked at N2. 2 helical membrane passes run 17 to 37 (LLVFYFHIKQQAIMPFFIFFF) and 51 to 71 (AFLAKHVFVGVCSPFFVVGFF). N132 and N137 each carry an N-linked (GlcNAc...) asparagine glycan.

Its subcellular location is the membrane. Functionally, may be involved in cell wall organization and biogenesis. This Saccharomyces cerevisiae (strain ATCC 204508 / S288c) (Baker's yeast) protein is Protein ECM12 (ECM12).